The following is a 419-amino-acid chain: RNA polymerase sigma factor sigD, chloroplastic (419 aa).

The N-terminal 52 residues, 1–52 (MATTIPTTATATMCPSPPVPTISPLLRTTHQCQPSPSLSSPFSIKLSTALVC), are a transit peptide targeting the chloroplast. A Polymerase core binding motif is present at residues 207–220 (DLIQEGSIGLLRGA). A DNA-binding region (H-T-H motif) is located at residues 377–396 (FEEIGKSLKLSRERVRQING).

The protein belongs to the sigma-70 factor family. Mostly expressed in leaves, and to a lesser extent in roots. Present in seedlings.

The protein resides in the plastid. Its subcellular location is the chloroplast. Sigma factors are initiation factors that promote the attachment of plastid-encoded RNA polymerase (PEP) to specific initiation sites and are then released. Regulates transcription of the ndhF gene which codes for a subunit of the plastid NDH [NAD(P)H dehydrogenase] complex. The sequence is that of RNA polymerase sigma factor sigD, chloroplastic (SIGD) from Arabidopsis thaliana (Mouse-ear cress).